A 372-amino-acid chain; its full sequence is Delta-type opioid receptor (372 aa).

The Extracellular segment spans residues 1 to 47 (MELVPSARAELQSSPLVNLSDAFPSAFPSAGANASGSPGARSASSLA). 2 N-linked (GlcNAc...) asparagine glycosylation sites follow: N18 and N33. A helical membrane pass occupies residues 48–75 (LAIAITALYSAVCAVGLLGNVLVMFGIV). Residues 76 to 85 (RYTKLKTATN) are Cytoplasmic-facing. Residues 86 to 110 (IYIFNLALADALATSTLPFQSAKYL) traverse the membrane as a helical segment. Topologically, residues 111 to 122 (METWPFGELLCK) are extracellular. An intrachain disulfide couples C121 to C198. Residues 123–144 (AVLSIDYYNMFTSIFTLTMMSV) traverse the membrane as a helical segment. Topologically, residues 145-163 (DRYIAVCHPVKALDFRTPA) are cytoplasmic. The helical transmembrane segment at 164 to 186 (KAKLINICIWVLASGVGVPIMVM) threads the bilayer. The Extracellular portion of the chain corresponds to 187–206 (AVTQPRDGAVVCMLQFPSPS). Residues 207 to 238 (WYWDTVTKICVFLFAFVVPILIITVCYGLMLL) form a helical membrane-spanning segment. The Cytoplasmic segment spans residues 239–261 (RLRSVRLLSGSKEKDRSLRRITR). A helical transmembrane segment spans residues 262 to 284 (MVLVVVGAFVVCWAPIHIFVIVW). The Extracellular portion of the chain corresponds to 285–299 (TLVDINRRDPLVVAA). Residues 300–321 (LHLCIALGYANSSLNPVLYAFL) traverse the membrane as a helical segment. Topologically, residues 322–372 (DENFKRCFRQLCRTPCGRQEPGSLRRPRQATTRERVTACTPSDGPGGGAAA) are cytoplasmic. Residue C333 is the site of S-palmitoyl cysteine attachment. The interval 340–372 (QEPGSLRRPRQATTRERVTACTPSDGPGGGAAA) is disordered.

It belongs to the G-protein coupled receptor 1 family. In terms of assembly, may form homooligomers. Forms a heterodimer with OPRM1. Interacts with GPRASP1. Interacts with RTP4; the interaction promotes cell surface localization of the OPRD1-OPRM1 heterodimer. Ubiquitinated. A basal ubiquitination seems not to be related to degradation. Ubiquitination is increased upon formation of OPRM1:OPRD1 oligomers leading to proteasomal degradation; the ubiquitination is diminished by RTP4. In terms of tissue distribution, brain, with high concentrations in the basal ganglia and limbic regions.

The protein localises to the cell membrane. Functionally, G-protein coupled receptor that functions as a receptor for endogenous enkephalins and for a subset of other opioids. Ligand binding causes a conformation change that triggers signaling via guanine nucleotide-binding proteins (G proteins) and modulates the activity of down-stream effectors, such as adenylate cyclase. Signaling leads to the inhibition of adenylate cyclase activity. Inhibits neurotransmitter release by reducing calcium ion currents and increasing potassium ion conductance. Plays a role in the perception of pain and in opiate-mediated analgesia. Plays a role in developing analgesic tolerance to morphine. This chain is Delta-type opioid receptor (Oprd1), found in Mus musculus (Mouse).